Consider the following 343-residue polypeptide: Protease HtpX homolog (343 aa).

2 helical membrane passes run 7–24 and 29–46; these read TMLLAFMTALFMGVGYLV and GMVVALFIAGGLNFFSYW. Zn(2+) is bound at residue histidine 130. The active site involves glutamate 131. Residue histidine 134 participates in Zn(2+) binding. 2 consecutive transmembrane segments (helical) span residues 145–165 and 177–197; these read LTATIAGAISMLGNFALLMGM and GAGMLGTVIALFVAPFAAMLV. Glutamate 206 is a Zn(2+) binding site. The segment at 308-343 is disordered; that stretch reads NLEDEDLNPEAQNGFTHNQKKKTVRRGKDRPTWLRH. Residues 325–335 are compositionally biased toward basic residues; sequence NQKKKTVRRGK.

It belongs to the peptidase M48B family. It depends on Zn(2+) as a cofactor.

The protein resides in the cell inner membrane. The polypeptide is Protease HtpX homolog (Bartonella bacilliformis (strain ATCC 35685 / KC583 / Herrer 020/F12,63)).